Reading from the N-terminus, the 301-residue chain is Probable alpha-L-glutamate ligase 2 (301 aa).

In terms of domain architecture, ATP-grasp spans 104–287 (LQLLSRKGIG…VTEPIVEYIE (184 aa)). Residues Lys141, 178–179 (EY), Asp187, and 211–213 (RSN) each bind ATP. 3 residues coordinate Mg(2+): Asp248, Glu260, and Asn262. Residues Asp248, Glu260, and Asn262 each contribute to the Mn(2+) site.

This sequence belongs to the RimK family. Mg(2+) serves as cofactor. Requires Mn(2+) as cofactor.

The sequence is that of Probable alpha-L-glutamate ligase 2 from Shewanella baltica (strain OS195).